The following is an 812-amino-acid chain: Fibrous sheath CABYR-binding protein (812 aa).

A disordered region spans residues 1–66 (MEESDEPEQP…SIGNIPGGKA (66 aa)). Residues serine 25, serine 57, serine 125, serine 133, serine 184, and serine 273 each carry the phosphoserine modification. Disordered stretches follow at residues 269–333 (IQAP…PKGT), 367–388 (DSGR…PPLS), 424–547 (FEDQ…PPSL), and 672–741 (PAEE…PSVK). Over residues 275-286 (AKETSAAETTAK) the composition is skewed to low complexity. Pro residues predominate over residues 488–501 (EVPPLPTEEWPLPP). Residues 502–513 (VTEESPAEVTPP) show a composition bias toward low complexity. Positions 514 to 528 (ETEEGPIEPAEEGPE) are enriched in acidic residues.

In terms of assembly, interacts with CABYR.

It is found in the cell projection. It localises to the cilium. Its subcellular location is the flagellum. Functionally, may be involved in the later stages of fibrous sheath biogenesis. Binds calcium. In Rattus norvegicus (Rat), this protein is Fibrous sheath CABYR-binding protein.